We begin with the raw amino-acid sequence, 361 residues long: Phenylalanine--tRNA ligase alpha subunit (361 aa).

Glutamate 260 provides a ligand contact to Mg(2+).

The protein belongs to the class-II aminoacyl-tRNA synthetase family. Phe-tRNA synthetase alpha subunit type 1 subfamily. Tetramer of two alpha and two beta subunits. Mg(2+) serves as cofactor.

The protein localises to the cytoplasm. It catalyses the reaction tRNA(Phe) + L-phenylalanine + ATP = L-phenylalanyl-tRNA(Phe) + AMP + diphosphate + H(+). The sequence is that of Phenylalanine--tRNA ligase alpha subunit from Chelativorans sp. (strain BNC1).